Consider the following 267-residue polypeptide: Tryptophan synthase alpha chain (267 aa).

Active-site proton acceptor residues include Glu-49 and Asp-60.

Belongs to the TrpA family. In terms of assembly, tetramer of two alpha and two beta chains.

The catalysed reaction is (1S,2R)-1-C-(indol-3-yl)glycerol 3-phosphate + L-serine = D-glyceraldehyde 3-phosphate + L-tryptophan + H2O. It functions in the pathway amino-acid biosynthesis; L-tryptophan biosynthesis; L-tryptophan from chorismate: step 5/5. Functionally, the alpha subunit is responsible for the aldol cleavage of indoleglycerol phosphate to indole and glyceraldehyde 3-phosphate. This chain is Tryptophan synthase alpha chain, found in Acinetobacter baylyi (strain ATCC 33305 / BD413 / ADP1).